The chain runs to 900 residues: Formin-like protein 5 (900 aa).

The helical; Signal-anchor transmembrane segment at 15–32 (SRLVFWLILFSGLLVITL) threads the bilayer. Positions 136–209 (RNLATKPGSS…PVSPAKKKED (74 aa)) are disordered. Residues 160–173 (PPRPPTRPKSPPPR) are compositionally biased toward pro residues. A helical transmembrane segment spans residues 214–234 (IIIAVVVTAVSTFLLAALFFL). 2 disordered regions span residues 273 to 440 (SVKG…DAPK) and 849 to 900 (ARGR…SDSD). Polar residues predominate over residues 281–304 (HQSFNIYSNQGKMSSFDGSNSDTS). Basic and acidic residues predominate over residues 307-316 (LEERLSHEGL). Low complexity predominate over residues 359 to 368 (FLKVSSKKAS). A compositionally biased stretch (pro residues) spans 369 to 429 (APPPPVPAPQ…GPKAPRPPSG (61 aa)). The region spanning 433–865 (ALDDDAPKTK…MARKQGSTAS (433 aa)) is the FH2 domain. Positions 860–876 (QGSTASASSETPRQTPS) are enriched in polar residues.

Belongs to the formin-like family. Class-I subfamily. Expressed in the endosperm. Localizes to the cell plate, a plant-specific membranous component that is assembled at the plane of cell division.

It localises to the membrane. Its function is as follows. Might be involved in the organization and polarity of the actin cytoskeleton. Interacts with the barbed end of actin filaments and nucleates actin-filament polymerization in vitro. Seems to play a role in cytokinesis. The chain is Formin-like protein 5 (FH5) from Arabidopsis thaliana (Mouse-ear cress).